Here is a 203-residue protein sequence, read N- to C-terminus: MAKAYDHLFKLLLIGDSGVGKTCLIIRFAEDNFNNTYISTIGIDFRIRTVDIEGKKIKLQVWDTAGQERFKTITTAYYRGAMGIILVYDITDEKSFENIQNWMKSIKENASAGVERLLLGNKCDMEAKRKVQKEQADKLAREHGIRFFETSAKSSMNVDEAFSSLARDILLKSGGRRLKNNNKPPSTDLKTCDKKNTNKCSLA.

Residues Ser17, Gly18, Gly20, Lys21, Thr22, Cys23, and Thr40 each contribute to the GTP site. Thr22 is a Mg(2+) binding site. The Switch 1 motif lies at 31 to 45; the sequence is DNFNNTYISTIGIDF. Thr40 contacts Mg(2+). Lys58 participates in a covalent cross-link: Glycyl lysine isopeptide (Lys-Gly) (interchain with G-Cter in ubiquitin). Asp63 contacts Mg(2+). The Switch 2 motif lies at 63-80; that stretch reads DTAGQERFKTITTAYYRG. 6 residues coordinate GTP: Gly66, Asn121, Lys122, Asp124, Ala152, and Lys153. A Cysteine methyl ester modification is found at Cys200. A lipid anchor (S-geranylgeranyl cysteine) is attached at Cys200. Residues 201–203 constitute a propeptide, removed in mature form; sequence SLA.

This sequence belongs to the small GTPase superfamily. Rab family. Interacts (GTP-bound form) with MICALL2; competes with RAB8A and is involved in tight junctions assembly. Interacts (GTP-bound form) with MICALL1. Interacts (GTP-bound form) with MICAL1, MICAL3, MICALCL, EHBP1 and EHBP1L1; ternary complexes of RAB8A, RAB13 and either MICAL1 or EHBP1L1 are possible. Interacts with PRKACA; downstream effector of RAB13 involved in tight junction assembly. Interacts with GRB2; may recruit RAB13 to the leading edge of migrating endothelial cells where it can activate RHOA. Interacts (isoprenylated form) with PDE6D; dissociates RAB13 from membranes. Interacts with BICDL2/BICDR2. Interacts with LEPROT and LEPROTL1. Mg(2+) is required as a cofactor. Post-translationally, ubiquitinated via 'Lys-11'-linked ubiquitination on Lys-58; impairing the recruitment of guanosine diphosphate (GDP) dissociation inhibitor 1/GDI1.

The protein resides in the cell membrane. It is found in the cytoplasmic vesicle membrane. Its subcellular location is the cell junction. The protein localises to the tight junction. It localises to the golgi apparatus. The protein resides in the trans-Golgi network membrane. It is found in the recycling endosome membrane. Its subcellular location is the cell projection. The protein localises to the lamellipodium. The catalysed reaction is GTP + H2O = GDP + phosphate + H(+). With respect to regulation, regulated by guanine nucleotide exchange factors (GEFs) including DENND1C, which promote the exchange of bound GDP for free GTP. Regulated by GTPase activating proteins (GAPs) which increase the GTP hydrolysis activity. Inhibited by GDP dissociation inhibitors (GDIs). Activated in response to insulin. In terms of biological role, the small GTPases Rab are key regulators of intracellular membrane trafficking, from the formation of transport vesicles to their fusion with membranes. Rabs cycle between an inactive GDP-bound form and an active GTP-bound form that is able to recruit to membranes different sets of downstream effectors directly responsible for vesicle formation, movement, tethering and fusion. RAB13 is involved in endocytic recycling and regulates the transport to the plasma membrane of transmembrane proteins like the tight junction protein OCLN/occludin. Thereby, it regulates the assembly and the activity of tight junctions. Moreover, it may also regulate tight junction assembly by activating the PKA signaling pathway and by reorganizing the actin cytoskeleton through the activation of the downstream effectors PRKACA and MICALL2 respectively. Through its role in tight junction assembly, may play a role in the establishment of Sertoli cell barrier. Plays also a role in angiogenesis through regulation of endothelial cells chemotaxis. Also involved in neurite outgrowth. Has also been proposed to play a role in post-Golgi membrane trafficking from the TGN to the recycling endosome. Finally, it has been involved in insulin-induced transport to the plasma membrane of the glucose transporter GLUT4 and therefore may play a role in glucose homeostasis. In Bos taurus (Bovine), this protein is Ras-related protein Rab-13 (RAB13).